A 1006-amino-acid polypeptide reads, in one-letter code: GATA zinc finger domain-containing protein 7 (1006 aa).

Residues 55–70 (SSSNNFINNHHNNQSS) are compositionally biased toward low complexity. 5 disordered regions span residues 55–116 (SSSN…APNL), 128–248 (PFQN…DPFY), 381–499 (NAKK…PLST), 528–638 (STSG…SSNS), and 657–800 (YNSN…NYHD). Residues 71–86 (DIHSISQSTPNLSTLI) show a composition bias toward polar residues. 2 stretches are compositionally biased toward low complexity: residues 87–110 (SSSS…NSSS) and 128–158 (PFQN…CNNS). Polar residues predominate over residues 159 to 168 (PVSSSTNYIP). Residues 169 to 180 (NNSTSNVVLNSS) are compositionally biased toward low complexity. A compositionally biased stretch (polar residues) spans 181–190 (IPTTSPNVLS). Composition is skewed to low complexity over residues 205 to 241 (NNNN…NNNN) and 388 to 410 (TNTN…NNNN). A compositionally biased stretch (polar residues) spans 411-426 (IQQANVNTSPISTSTT). Composition is skewed to low complexity over residues 427 to 456 (PNNN…QQAQ) and 468 to 496 (SITP…GASP). Positions 528–539 (STSGMLSTTNPY) are enriched in polar residues. Residues 540–557 (THHSPNTSSTVSSSVTSP) show a composition bias toward low complexity. Residues 558–589 (LINQYGTNPTLTNNHSFYGSLASNQNTGASDG) are compositionally biased toward polar residues. Low complexity-rich tracts occupy residues 590 to 601 (NNNNNNNNNNNN) and 619 to 638 (SSNP…SSNS). Residues 662–680 (GSGMTTPQSLGHSPSHNDY) show a composition bias toward polar residues. Composition is skewed to low complexity over residues 681–706 (NSNN…NSNN) and 713–785 (SNSS…SSNN). A GATA-type zinc finger spans residues 842–867 (CHNCGTKNTPEWRRGPSGPATLCNAC). The tract at residues 925–957 (NNASSSSSSSSSSSSSSSSSSSTSSYSSSSYNI) is disordered. A compositionally biased stretch (low complexity) spans 928-954 (SSSSSSSSSSSSSSSSSSSTSSYSSSS).

The chain is GATA zinc finger domain-containing protein 7 (gtaG) from Dictyostelium discoideum (Social amoeba).